A 450-amino-acid chain; its full sequence is Phosphoglucosamine mutase 2 (450 aa).

The active-site Phosphoserine intermediate is Ser101. Mg(2+) contacts are provided by Ser101, Asp245, Asp247, and Asp249. Ser101 is subject to Phosphoserine.

Belongs to the phosphohexose mutase family. Requires Mg(2+) as cofactor. In terms of processing, activated by phosphorylation.

It carries out the reaction alpha-D-glucosamine 1-phosphate = D-glucosamine 6-phosphate. Catalyzes the conversion of glucosamine-6-phosphate to glucosamine-1-phosphate. The chain is Phosphoglucosamine mutase 2 from Shewanella sp. (strain MR-4).